Reading from the N-terminus, the 121-residue chain is Large ribosomal subunit protein bL12 (121 aa).

It belongs to the bacterial ribosomal protein bL12 family. As to quaternary structure, homodimer. Part of the ribosomal stalk of the 50S ribosomal subunit. Forms a multimeric L10(L12)X complex, where L10 forms an elongated spine to which 2 to 4 L12 dimers bind in a sequential fashion. Binds GTP-bound translation factors.

Functionally, forms part of the ribosomal stalk which helps the ribosome interact with GTP-bound translation factors. Is thus essential for accurate translation. In Clostridium novyi (strain NT), this protein is Large ribosomal subunit protein bL12.